Here is a 296-residue protein sequence, read N- to C-terminus: HTH-type transcriptional regulator GltR (296 aa).

Residues 1 to 58 enclose the HTH lysR-type domain; that stretch reads MNIQLLQVFLTTAREGSISKAALTLNYAQSNVTNKIQQLENDLQTKLFYRHSRGITLT. The H-T-H motif DNA-binding region spans 18–37; sequence ISKAALTLNYAQSNVTNKIQ.

This sequence belongs to the LysR transcriptional regulatory family.

In terms of biological role, positive regulator of glutamate biosynthesis (gltAB genes). Negatively regulates its own expression. This chain is HTH-type transcriptional regulator GltR (gltR), found in Bacillus subtilis (strain 168).